The sequence spans 494 residues: Aspartyl/glutamyl-tRNA(Asn/Gln) amidotransferase subunit B (494 aa).

The protein belongs to the GatB/GatE family. GatB subfamily. As to quaternary structure, heterotrimer of A, B and C subunits.

The catalysed reaction is L-glutamyl-tRNA(Gln) + L-glutamine + ATP + H2O = L-glutaminyl-tRNA(Gln) + L-glutamate + ADP + phosphate + H(+). The enzyme catalyses L-aspartyl-tRNA(Asn) + L-glutamine + ATP + H2O = L-asparaginyl-tRNA(Asn) + L-glutamate + ADP + phosphate + 2 H(+). Functionally, allows the formation of correctly charged Asn-tRNA(Asn) or Gln-tRNA(Gln) through the transamidation of misacylated Asp-tRNA(Asn) or Glu-tRNA(Gln) in organisms which lack either or both of asparaginyl-tRNA or glutaminyl-tRNA synthetases. The reaction takes place in the presence of glutamine and ATP through an activated phospho-Asp-tRNA(Asn) or phospho-Glu-tRNA(Gln). The protein is Aspartyl/glutamyl-tRNA(Asn/Gln) amidotransferase subunit B of Trichodesmium erythraeum (strain IMS101).